The primary structure comprises 762 residues: MGNGSVKPKHSKHPDGHSGNLTTDALRNKVTELERELRRKDAEIQEREYHLKELREQLSKQTVAIAELTEELQNKCIQLNKLQDVVHMQGGSPLQASPDKVPLEVHRKTSGLVSLHSRRGAKAGVSAEPTTRTYDLNKPPEFSFEKARVRKDSSEKKLITDALNKNQFLKRLDPQQIKDMVECMYGRNYQQGSYIIKQGEPGNHIFVLAEGRLEVFQGEKLLSSIPMWTTFGELAILYNCTRTASVKAITNVKTWALDREVFQNIMRRTAQARDEQYRNFLRSVSLLKNLPEDKLTKIIDCLEVEYYDKGDYIIREGEEGSTFFILAKGKVKVTQSTEGHDQPQLIKTLQKGEYFGEKALISDDVRSANIIAEENDVACLVIDRETFNQTVGTFEELQKYLEGYVANLNRDDEKRHAKRSMSNWKLSKALSLEMIQLKEKVARFSSSSPFQNLEIIATLGVGGFGRVELVKVKNENVAFAMKCIRKKHIVDTKQQEHVYSEKRILEELCSPFIVKLYRTFKDNKYVYMLLEACLGGELWSILRDRGSFDEPTSKFCVACVTEAFDYLHRLGIIYRDLKPENLILDAEGYLKLVDFGFAKKIGSGQKTWTFCGTPEYVAPEVILNKGHDFSVDFWSLGILVYELLTGNPPFSGVDQMMTYNLILKGIEKMDFPRKITRRPEDLIRRLCRQNPTERLGNLKNGINDIKKHRWLNGFNWEGLKARSLPSPLQRELKGPIDHSYFDKYPPEKGMPPDELSGWDKDF.

Positions 1-25 (MGNGSVKPKHSKHPDGHSGNLTTDA) are disordered. Gly2 is lipidated: N-myristoyl glycine. The stretch at 23 to 85 (TDALRNKVTE…CIQLNKLQDV (63 aa)) forms a coiled coil. A phosphoserine mark is found at Ser110 and Ser117. Residues 117–138 (SRRGAKAGVSAEPTTRTYDLNK) form a disordered region. The interval 168–283 (FLKRLDPQQI…DEQYRNFLRS (116 aa)) is cGMP-binding, high affinity; cAMP-binding, moderate affinity. 3',5'-cyclic AMP contacts are provided by residues 232–235 (GELA) and 242–243 (RT). Residues 232–235 (GELA), 242–243 (RT), Lys347, 356–359 (GEKA), 366–367 (RS), Asp412, and Arg415 each bind 3',5'-cyclic GMP. The interval 286–416 (LLKNLPEDKL…NLNRDDEKRH (131 aa)) is cGMP-binding, high affinity; cAMP-binding, low affinity. Residue Ser431 is modified to Phosphoserine. One can recognise a Protein kinase domain in the interval 453–711 (LEIIATLGVG…INDIKKHRWL (259 aa)). ATP contacts are provided by residues 459–467 (LGVGGFGRV) and Lys482. The active-site Proton acceptor is Asp576. Thr609 carries the post-translational modification Phosphothreonine. Positions 712-762 (NGFNWEGLKARSLPSPLQRELKGPIDHSYFDKYPPEKGMPPDELSGWDKDF) constitute an AGC-kinase C-terminal domain. Residues 740 to 762 (YFDKYPPEKGMPPDELSGWDKDF) form a disordered region.

This sequence belongs to the protein kinase superfamily. AGC Ser/Thr protein kinase family. cGMP subfamily. Interacts with GRIA1/GLUR1. Post-translationally, myristoylation mediates membrane localization. Highly concentrated in brain, lung and intestinal mucosa.

Its subcellular location is the apical cell membrane. It catalyses the reaction L-seryl-[protein] + ATP = O-phospho-L-seryl-[protein] + ADP + H(+). The catalysed reaction is L-threonyl-[protein] + ATP = O-phospho-L-threonyl-[protein] + ADP + H(+). Binding of cGMP results in enzyme activation. Crucial regulator of intestinal secretion and bone growth. Phosphorylates and activates CFTR on the plasma membrane. Plays a key role in intestinal secretion by regulating cGMP-dependent translocation of CFTR in jejunum. Acts downstream of NMDAR to activate the plasma membrane accumulation of GRIA1/GLUR1 in synapse and increase synaptic plasticity. Phosphorylates GRIA1/GLUR1 at Ser-863. Acts as a regulator of gene expression and activator of the extracellular signal-regulated kinases MAPK3/ERK1 and MAPK1/ERK2 in mechanically stimulated osteoblasts. Under fluid shear stress, mediates ERK activation and subsequent induction of FOS, FOSL1/FRA1, FOSL2/FRA2 and FOSB that play a key role in the osteoblast anabolic response to mechanical stimulation. In Homo sapiens (Human), this protein is cGMP-dependent protein kinase 2 (PRKG2).